A 204-amino-acid polypeptide reads, in one-letter code: Thymidine kinase (204 aa).

ATP contacts are provided by residues 15-22 (GSMFSGKS) and 88-91 (DEVQ). Catalysis depends on Glu-89, which acts as the Proton acceptor. 4 residues coordinate Zn(2+): Cys-145, Cys-148, Cys-183, and Cys-186.

This sequence belongs to the thymidine kinase family. In terms of assembly, homotetramer.

It is found in the cytoplasm. It carries out the reaction thymidine + ATP = dTMP + ADP + H(+). The polypeptide is Thymidine kinase (Halalkalibacterium halodurans (strain ATCC BAA-125 / DSM 18197 / FERM 7344 / JCM 9153 / C-125) (Bacillus halodurans)).